Consider the following 317-residue polypeptide: Methionyl-tRNA formyltransferase (317 aa).

117 to 120 (SLLP) is a (6S)-5,6,7,8-tetrahydrofolate binding site.

It belongs to the Fmt family.

The enzyme catalyses L-methionyl-tRNA(fMet) + (6R)-10-formyltetrahydrofolate = N-formyl-L-methionyl-tRNA(fMet) + (6S)-5,6,7,8-tetrahydrofolate + H(+). Functionally, attaches a formyl group to the free amino group of methionyl-tRNA(fMet). The formyl group appears to play a dual role in the initiator identity of N-formylmethionyl-tRNA by promoting its recognition by IF2 and preventing the misappropriation of this tRNA by the elongation apparatus. This is Methionyl-tRNA formyltransferase from Herminiimonas arsenicoxydans.